Consider the following 221-residue polypeptide: Ras-related protein RabS (221 aa).

16–23 (GDNQCGKS) serves as a coordination point for GTP. The Effector region signature appears at 38-47 (GIQLWHGIEI). GTP contacts are provided by residues 71 to 75 (DGNGG) and 137 to 140 (NKCD). A Cysteine methyl ester modification is found at cysteine 218. Cysteine 218 is lipidated: S-geranylgeranyl cysteine. The propeptide at 219–221 (IIN) is removed in mature form.

This sequence belongs to the small GTPase superfamily. Rab family.

The protein localises to the cell membrane. This Dictyostelium discoideum (Social amoeba) protein is Ras-related protein RabS (rabS).